The sequence spans 75 residues: F1845 fimbrial adhesin operon regulatory protein DaaF (75 aa).

Functionally, may have a possible regulatory function on the expression of the other daa genes. This is F1845 fimbrial adhesin operon regulatory protein DaaF (daaF) from Escherichia coli.